We begin with the raw amino-acid sequence, 896 residues long: Glutamate receptor 2.4 (896 aa).

Residues 1 to 24 form the signal peptide; sequence MKRHLNDVVLVFLVFIFGVKLGKG. Over 25–565 the chain is Extracellular; that stretch reads QNTTIQVINV…SSLIFFKPLT (541 aa). N26, N46, N53, N204, N267, N331, N341, and N527 each carry an N-linked (GlcNAc...) asparagine glycan. A helical transmembrane segment spans residues 566–586; the sequence is PGLWGMTLGSFFVVGFVVWIL. The Cytoplasmic segment spans residues 587–595; it reads EHRVNSEFT. A helical transmembrane segment spans residues 596–616; that stretch reads GPPQYQISTMFWFAFSIMVFA. Residues 617–620 lie on the Cytoplasmic side of the membrane; that stretch reads PRER. The helical transmembrane segment at 621 to 641 threads the bilayer; sequence VMSFTARVVVITWYFIVLVLT. The Extracellular segment spans residues 642–815; that stretch reads QSYTASLSSL…VSFRKLSLDS (174 aa). Residues 816–836 traverse the membrane as a helical segment; the sequence is FLLLFVAAATVCTLALLKFVI. Residues 837-896 lie on the Cytoplasmic side of the membrane; the sequence is CFLIQNRIILNDEFYRGKRMKEMWLKFMESDGESYISRVRSTCPQVLIQPREEDIDPING.

Belongs to the glutamate-gated ion channel (TC 1.A.10.1) family. As to quaternary structure, may form heteromers. As to expression, expressed predominantly in roots.

The protein localises to the membrane. Glutamate-gated receptor that probably acts as a non-selective cation channel. May be involved in light-signal transduction and calcium homeostasis via the regulation of calcium influx into cells. In Arabidopsis thaliana (Mouse-ear cress), this protein is Glutamate receptor 2.4 (GLR2.4).